A 399-amino-acid polypeptide reads, in one-letter code: Carbamoyl phosphate synthase small chain (399 aa).

The tract at residues 1–206 is CPSase; sequence MTQTIPSPKP…NKGYKTNNDA (206 aa). L-glutamine contacts are provided by serine 60, glycine 258, and glycine 260. One can recognise a Glutamine amidotransferase type-1 domain in the interval 210 to 398; that stretch reads HIVAIDYGIK…FNLIMDYKKT (189 aa). The Nucleophile role is filled by cysteine 287. L-glutamine is bound by residues leucine 288, glutamine 291, asparagine 329, glycine 331, and phenylalanine 332. Catalysis depends on residues histidine 371 and glutamate 373.

Belongs to the CarA family. As to quaternary structure, composed of two chains; the small (or glutamine) chain promotes the hydrolysis of glutamine to ammonia, which is used by the large (or ammonia) chain to synthesize carbamoyl phosphate. Tetramer of heterodimers (alpha,beta)4.

It catalyses the reaction hydrogencarbonate + L-glutamine + 2 ATP + H2O = carbamoyl phosphate + L-glutamate + 2 ADP + phosphate + 2 H(+). The enzyme catalyses L-glutamine + H2O = L-glutamate + NH4(+). Its pathway is amino-acid biosynthesis; L-arginine biosynthesis; carbamoyl phosphate from bicarbonate: step 1/1. It functions in the pathway pyrimidine metabolism; UMP biosynthesis via de novo pathway; (S)-dihydroorotate from bicarbonate: step 1/3. Its function is as follows. Small subunit of the glutamine-dependent carbamoyl phosphate synthetase (CPSase). CPSase catalyzes the formation of carbamoyl phosphate from the ammonia moiety of glutamine, carbonate, and phosphate donated by ATP, constituting the first step of 2 biosynthetic pathways, one leading to arginine and/or urea and the other to pyrimidine nucleotides. The small subunit (glutamine amidotransferase) binds and cleaves glutamine to supply the large subunit with the substrate ammonia. The polypeptide is Carbamoyl phosphate synthase small chain (Bartonella henselae (strain ATCC 49882 / DSM 28221 / CCUG 30454 / Houston 1) (Rochalimaea henselae)).